The following is a 450-amino-acid chain: Homogentisate 1,2-dioxygenase (450 aa).

His-304 acts as the Proton acceptor in catalysis. The Fe cation site is built by His-347 and Glu-353. Tyr-362 and His-383 together coordinate homogentisate. His-383 contacts Fe cation.

The protein belongs to the homogentisate dioxygenase family. In terms of assembly, hexamer; dimer of trimers. Requires Fe cation as cofactor.

It carries out the reaction homogentisate + O2 = 4-maleylacetoacetate + H(+). The protein operates within amino-acid degradation; L-phenylalanine degradation; acetoacetate and fumarate from L-phenylalanine: step 4/6. Functionally, involved in the catabolism of homogentisate (2,5-dihydroxyphenylacetate or 2,5-OH-PhAc), a central intermediate in the degradation of phenylalanine and tyrosine. Catalyzes the oxidative ring cleavage of the aromatic ring of homogentisate to yield maleylacetoacetate. The chain is Homogentisate 1,2-dioxygenase from Burkholderia mallei (strain NCTC 10229).